Reading from the N-terminus, the 598-residue chain is Nuclear receptor subfamily 4 group A member 1 (598 aa).

Disordered stretches follow at residues 1–50 (MPCI…PTAL) and 120–159 (LDET…GSFG). 2 stretches are compositionally biased toward low complexity: residues 37–50 (LASP…PTAL) and 134–145 (SPCSAPSPSTPS). The tract at residues 171 to 466 (RAWTEQLPKA…PAEGKLIFCS (296 aa)) is required for nuclear import. The segment at residues 264–339 (EGRCAVCGDN…VGMVKEVVRT (76 aa)) is a DNA-binding region (nuclear receptor). NR C4-type zinc fingers lie at residues 267 to 287 (CAVC…CEGC) and 303 to 327 (CLAN…FQKC). The required for binding NBRE-containing DNA stretch occupies residues 268–354 (AVCGDNASCQ…RRGRLPSKPK (87 aa)). The required for the interaction with RXRA stretch occupies residues 299-361 (AKYICLANKD…KPKQPPDASP (63 aa)). At S341 the chain carries Phosphoserine; by PKA. The disordered stretch occupies residues 341–361 (SLKGRRGRLPSKPKQPPDASP). At S351 the chain carries Phosphoserine; by PKA, RPS6KA1 and RPS6KA3. An NR LBD domain is found at 360 to 595 (SPANLLTSLV…PIVDKIFMDT (236 aa)). The binds lipopolysaccharide stretch occupies residues 521-544 (PRRVEELQNRIASCLKEHVSAVAG). An AF-2 region spans residues 584-595 (PPPIVDKIFMDT).

The protein belongs to the nuclear hormone receptor family. NR4 subfamily. As to quaternary structure, binds the NGFI-B response element (NBRE) as a monomer. Binds the Nur response element (NurRE), consisting of two inverse NBRE-related octanucleotide repeats separated by 6 base-pairs, as a dimer. Interacts (via N-terminus) with NLRP3 (via LRR repeat domain); the interaction is direct, requires binding of NR4A1/Nur77 to NBRE-containing dsDNA and lipopolysaccharide, and leads to non-canonical NLRP3 inflammasome activation. Interacts with GADD45GIP1. Interacts with STK11. Heterodimer (via DNA-binding domain) with RXRA (via C-terminus); DNA-binding of the heterodimer is enhanced by 9-cis retinoic acid. Competes for the RXRA interaction with EP300 and thereby attenuates EP300 mediated acetylation of RXRA. Interacts with NCOA1. Interacts with NCOA2. Interacts with NCOA3. Zn(2+) is required as a cofactor. Post-translationally, phosphorylated at Ser-351 by RPS6KA1 and RPS6KA3 in response to mitogenic or stress stimuli. Acetylated by p300/CBP, acetylation increases stability. Deacetylated by HDAC1.

The protein localises to the cytoplasm. It localises to the cytosol. It is found in the nucleus. The protein resides in the mitochondrion. In terms of biological role, orphan nuclear receptor. Binds the NGFI-B response element (NBRE) 5'-AAAGGTCA-3'. Binds 9-cis-retinoic acid outside of its ligand-binding (NR LBD) domain. Participates in energy homeostasis by sequestrating the kinase STK11 in the nucleus, thereby attenuating cytoplasmic AMPK activation. Regulates the inflammatory response in macrophages by regulating metabolic adaptations during inflammation, including repressing the transcription of genes involved in the citric acid cycle (TCA). Inhibits NF-kappa-B signaling by binding to low-affinity NF-kappa-B binding sites, such as at the IL2 promoter. May act concomitantly with NR4A2 in regulating the expression of delayed-early genes during liver regeneration. Plays a role in the vascular response to injury. Functionally, in the cytosol, upon its detection of both bacterial lipopolysaccharide (LPS) and NBRE-containing mitochondrial DNA released by GSDMD pores during pyroptosis, it promotes non-canonical NLRP3 inflammasome activation by stimulating association of NLRP3 and NEK7. This Canis lupus familiaris (Dog) protein is Nuclear receptor subfamily 4 group A member 1 (NR4A1).